A 384-amino-acid polypeptide reads, in one-letter code: Probable E3 ubiquitin-protein ligase rnf113 (384 aa).

The span at 1 to 11 (MDLFRKPKKRN) shows a compositional bias: basic residues. A disordered region spans residues 1–96 (MDLFRKPKKR…GPSGPRDQGA (96 aa)). Polar residues predominate over residues 42–52 (PMVQSTKQLDA). Residues 60-71 (SSDDSDDSDDNQ) are compositionally biased toward acidic residues. A C3H1-type zinc finger spans residues 175-203 (DFAPDICKDYKETGFCTFGDSCKFVHDRS). Residues 241–279 (CFICGNPFVDPIVTKCKHYFCTGCALKSFQKSSKCPICQ) form an RING-type zinc finger. The interval 299–384 (KKQQQKQEAE…ESDDDDAEKD (86 aa)) is disordered. Composition is skewed to basic and acidic residues over residues 303-312 (QKQEAEKQEE) and 320-334 (EKPHECDDHHHHDHE). A compositionally biased stretch (acidic residues) spans 351 to 384 (EKSDEEQEIMMEDVEGLEGGENDSESDDDDAEKD).

The catalysed reaction is S-ubiquitinyl-[E2 ubiquitin-conjugating enzyme]-L-cysteine + [acceptor protein]-L-lysine = [E2 ubiquitin-conjugating enzyme]-L-cysteine + N(6)-ubiquitinyl-[acceptor protein]-L-lysine.. It participates in protein modification; protein ubiquitination. In terms of biological role, may function as E3 ubiquitin-protein ligase that catalyzes the transfer of ubiquitin onto target proteins. May play a role in DNA repair via its role in the synthesis of 'Lys-63'-linked polyubiquitin chains that recruit proteins involved in repair to sites of DNA damage by alkylating agents. In Caenorhabditis elegans, this protein is Probable E3 ubiquitin-protein ligase rnf113 (rnf-113).